A 77-amino-acid chain; its full sequence is Chassatide C2 (77 aa).

The N-terminal stretch at 1 to 24 (MAKFANYLMLFLLVASLVMLEAQS) is a signal peptide. A propeptide spans 25 to 44 (SDTIKVPDLGKRLLMNRDPN) (removed in mature form). Residues 45 to 75 (GIPCAESCVWIPCTITALMGCSCKNNVCYNN) constitute a cross-link (cyclopeptide (Gly-Asn)). 3 disulfides stabilise this stretch: cysteine 48-cysteine 65, cysteine 52-cysteine 67, and cysteine 57-cysteine 72. A Methionine sulfoxide; in form chassatide chaC2A modification is found at methionine 63. The propeptide at 76–77 (EL) is removed in mature form.

This sequence belongs to the cyclotide family. Bracelet subfamily. This is a cyclic peptide. As to expression, expressed in fruit, pedicel and stem but not in leaf and root (at protein level).

Functionally, chassatide C2: Probably participates in a plant defense mechanism. Has no activity against bacteria up to a concentration of 80 uM. Has cytotoxic but no hemolytic activity. In terms of biological role, chassatide C2A: Probably participates in a plant defense mechanism. Has no activity against bacteria up to a concentration of 80 uM. Has no cytotoxic and no hemolytic activity. The protein is Chassatide C2 of Chassalia chartacea (Chassalia curviflora).